Reading from the N-terminus, the 147-residue chain is Hemoglobin subunit beta (147 aa).

Positions 3-147 (EWTDFERATI…VVSSLGRQYH (145 aa)) constitute a Globin domain. Heme b-binding residues include His-64 and His-93.

Belongs to the globin family. Hb 1 is a heterotetramer of two alpha-1 and two beta chains. Hb 2 is a heterotetramer of two alpha-2 and two beta chains. In terms of tissue distribution, red blood cells.

Its function is as follows. Involved in oxygen transport from gills to the various peripheral tissues. The sequence is that of Hemoglobin subunit beta (hbb) from Cottoperca gobio (Frogmouth).